Consider the following 191-residue polypeptide: Crossover junction endodeoxyribonuclease RuvC (191 aa).

Active-site residues include Asp7, Glu67, and Asp141. The Mg(2+) site is built by Asp7, Glu67, and Asp141.

This sequence belongs to the RuvC family. Homodimer which binds Holliday junction (HJ) DNA. The HJ becomes 2-fold symmetrical on binding to RuvC with unstacked arms; it has a different conformation from HJ DNA in complex with RuvA. In the full resolvosome a probable DNA-RuvA(4)-RuvB(12)-RuvC(2) complex forms which resolves the HJ. Requires Mg(2+) as cofactor.

Its subcellular location is the cytoplasm. It carries out the reaction Endonucleolytic cleavage at a junction such as a reciprocal single-stranded crossover between two homologous DNA duplexes (Holliday junction).. Its function is as follows. The RuvA-RuvB-RuvC complex processes Holliday junction (HJ) DNA during genetic recombination and DNA repair. Endonuclease that resolves HJ intermediates. Cleaves cruciform DNA by making single-stranded nicks across the HJ at symmetrical positions within the homologous arms, yielding a 5'-phosphate and a 3'-hydroxyl group; requires a central core of homology in the junction. The consensus cleavage sequence is 5'-(A/T)TT(C/G)-3'. Cleavage occurs on the 3'-side of the TT dinucleotide at the point of strand exchange. HJ branch migration catalyzed by RuvA-RuvB allows RuvC to scan DNA until it finds its consensus sequence, where it cleaves and resolves the cruciform DNA. The sequence is that of Crossover junction endodeoxyribonuclease RuvC from Myxococcus xanthus (strain DK1622).